Here is a 410-residue protein sequence, read N- to C-terminus: Mitochondrial potassium channel (410 aa).

A mitochondrion-targeting transit peptide spans 1-35 (MTGCSPVFTMQQVVGVSHRLVWRTFRGTDLLMTRT). The Mitochondrial matrix portion of the chain corresponds to 36–201 (LCSPGPSRPG…KERTRAERTK (166 aa)). The stretch at 116-143 (VREAREDLEAQQTKLKEVRDRLDRVSRE) forms a coiled coil. The helical transmembrane segment at 202-222 (NWSLIGSVLGALIGVAGSTYV) threads the bilayer. Topologically, residues 223-385 (NRVRLQELKA…RLEAQANRNA (163 aa)) are mitochondrial intermembrane. The tract at residues 276 to 296 (GQDQGSGSPTGPSSPRGKDID) is disordered. A compositionally biased stretch (low complexity) spans 280–290 (GSGSPTGPSSP). A helical membrane pass occupies residues 386-406 (ISSTLVTCVTFMATLPLLYML). Topologically, residues 407–410 (FKTS) are mitochondrial matrix.

The mitochondrial potassium channel (mitoK(ATP)) forms a heteromultimer.

The protein localises to the mitochondrion inner membrane. The catalysed reaction is K(+)(in) = K(+)(out). Channel activity inhibited by ATP via ABCB8/MITOSUR subunit. In terms of biological role, pore-forming subunit of the mitochondrial ATP-gated potassium channel (mitoK(ATP)). Together with ATP-binding subunit ABCB8/MITOSUR of the mitoK(ATP) channel, mediates ATP-dependent K(+) currents across the mitochondrial inner membrane. An increase in ATP intracellular levels closes the channel, inhibiting K(+) transport, whereas a decrease in ATP levels enhances K(+) uptake in the mitochondrial matrix. May contribute to the homeostatic control of cellular metabolism under stress conditions by regulating the mitochondrial matrix volume. The chain is Mitochondrial potassium channel from Rattus norvegicus (Rat).